We begin with the raw amino-acid sequence, 261 residues long: Bidirectional sugar transporter SWEET1b (261 aa).

The Extracellular portion of the chain corresponds to 1–6 (MEDLAK). The chain crosses the membrane as a helical span at residues 7 to 27 (FLFGVSGNVIALFLFLSPVPT). In terms of domain architecture, MtN3/slv 1 spans 7–95 (FLFGVSGNVI…VVFLVFASTH (89 aa)). Topologically, residues 28-42 (FWRIIRRKSTEDFSG) are cytoplasmic. The helical transmembrane segment at 43-63 (VPYNMTLINCLLSAWYGLPFV) threads the bilayer. Topologically, residues 64-71 (SPNNILVS) are extracellular. The helical transmembrane segment at 72 to 92 (TINGAGAVIETAYVVVFLVFA) threads the bilayer. Topologically, residues 93 to 101 (STHKTRLRT) are cytoplasmic. The helical transmembrane segment at 102–122 (LGLAAAVASVFAAVALVSLLA) threads the bilayer. Topologically, residues 123–129 (LHGQHRK) are extracellular. Residues 130–150 (LLCGVAATVCSICMYASPLSI) traverse the membrane as a helical segment. The 83-residue stretch at 133-215 (GVAATVCSIC…VLYAIYRNNK (83 aa)) folds into the MtN3/slv 2 domain. Topologically, residues 151–164 (MRLVIKTKSVEYMP) are cytoplasmic. The helical transmembrane segment at 165-185 (FLLSLAVFLCGTSWFIYGLLG) threads the bilayer. Residues 186 to 189 (RDPF) lie on the Extracellular side of the membrane. A helical transmembrane segment spans residues 190-210 (VTIPNGCGSFLGAVQLVLYAI). Residues 211–261 (YRNNKGAGGGSGGKQAGDDDVEMAEGRNNKVADGGAAEDDSTAGGKAGTEV) are Cytoplasmic-facing. The disordered stretch occupies residues 218-261 (GGGSGGKQAGDDDVEMAEGRNNKVADGGAAEDDSTAGGKAGTEV).

The protein belongs to the SWEET sugar transporter family. In terms of assembly, forms homodimers.

Its subcellular location is the cell membrane. It carries out the reaction D-glucose(out) = D-glucose(in). The catalysed reaction is D-galactose(in) = D-galactose(out). Functionally, mediates transport of sugars across the plasma membrane. Can transport glucose and galactose, but not fructose, mannose and sucrose. The protein is Bidirectional sugar transporter SWEET1b (SWEET1B) of Oryza sativa subsp. indica (Rice).